A 1638-amino-acid chain; its full sequence is DNA polymerase III PolC-type (1638 aa).

Positions 193 to 212 (SEIKKQRSEERESKNTREAK) are disordered. Basic and acidic residues predominate over residues 194–212 (EIKKQRSEERESKNTREAK). An Exonuclease domain is found at 596-752 (YVVFDVETTG…FDAEATGRLL (157 aa)).

Belongs to the DNA polymerase type-C family. PolC subfamily.

Its subcellular location is the cytoplasm. It carries out the reaction DNA(n) + a 2'-deoxyribonucleoside 5'-triphosphate = DNA(n+1) + diphosphate. Functionally, required for replicative DNA synthesis. This DNA polymerase also exhibits 3' to 5' exonuclease activity. This chain is DNA polymerase III PolC-type, found in Lactococcus lactis subsp. lactis (strain IL1403) (Streptococcus lactis).